The chain runs to 424 residues: uncharacterized protein (424 aa).

Belongs to the serpin family.

This is an uncharacterized protein from Methanosarcina acetivorans (strain ATCC 35395 / DSM 2834 / JCM 12185 / C2A).